A 793-amino-acid polypeptide reads, in one-letter code: 3',5'-cyclic-nucleotide phosphodiesterase regA (793 aa).

The interval 1 to 153 is disordered; the sequence is MNNKQEEIDQ…SSHRVSDFSD (153 aa). Composition is skewed to low complexity over residues 13 to 34, 54 to 69, and 80 to 121; these read SSTSTSPSPSSSSSPSNNDSTS, NKNNNNNNNNNNSNNN, and NNSS…NNNN. One can recognise a Response regulatory domain in the interval 161–280; the sequence is RILVADDDDV…LLKKKIDTVL (120 aa). 4-aspartylphosphate is present on Asp212. One can recognise a PDEase domain in the interval 410–733; sequence RRNSIPTFPQ…ENWQAYMELQ (324 aa). His487 (proton donor) is an active-site residue. Residues His491, His527, Asp528, and Asp639 each contribute to the a divalent metal cation site. Residues 756–793 are disordered; the sequence is KLPKIDEEENRDKVSSSSSSSTAPLTSTSSSNNETSSS. Over residues 770–793 the composition is skewed to low complexity; the sequence is SSSSSSSTAPLTSTSSSNNETSSS.

The protein belongs to the cyclic nucleotide phosphodiesterase family. It depends on a divalent metal cation as a cofactor. Post-translationally, the phosphorelay mechanism involves the sequential transfer of a phosphate group from Asp-212 of pde2 to 'His-65' of rdeA. Phosphorylation of Asp-212 activates the phosphodiesterase domain.

The protein localises to the cytoplasm. It localises to the cytosol. The enzyme catalyses 3',5'-cyclic AMP + H2O = AMP + H(+). Inhibited by 3-isobutyl-1-methylxanthine (IBMX). In terms of biological role, phosphodiesterase specific for cAMP. Involved in the degradation of intracellular cAMP. Morphological suppressor of tagB. Phosphorelay protein that accepts phosphate from rdeA or supplies phosphate from regA; depending on the relative concentration of the phosphodonor proteins. The sequence is that of 3',5'-cyclic-nucleotide phosphodiesterase regA (regA) from Dictyostelium discoideum (Social amoeba).